Reading from the N-terminus, the 260-residue chain is Putative hydro-lyase Bmul_5125/BMULJ_03391 (260 aa).

This sequence belongs to the D-glutamate cyclase family.

This chain is Putative hydro-lyase Bmul_5125/BMULJ_03391, found in Burkholderia multivorans (strain ATCC 17616 / 249).